Consider the following 250-residue polypeptide: tRNA (guanine-N(1)-)-methyltransferase (250 aa).

S-adenosyl-L-methionine is bound by residues Gly113 and 133–138; that span reads VGDYVL.

This sequence belongs to the RNA methyltransferase TrmD family. In terms of assembly, homodimer.

The protein localises to the cytoplasm. It carries out the reaction guanosine(37) in tRNA + S-adenosyl-L-methionine = N(1)-methylguanosine(37) in tRNA + S-adenosyl-L-homocysteine + H(+). Functionally, specifically methylates guanosine-37 in various tRNAs. This chain is tRNA (guanine-N(1)-)-methyltransferase, found in Proteus mirabilis (strain HI4320).